The primary structure comprises 487 residues: Glutamyl-tRNA(Gln) amidotransferase subunit A (487 aa).

Residues Lys77 and Ser152 each act as charge relay system in the active site. Catalysis depends on Ser176, which acts as the Acyl-ester intermediate.

The protein belongs to the amidase family. GatA subfamily. As to quaternary structure, heterotrimer of A, B and C subunits.

It carries out the reaction L-glutamyl-tRNA(Gln) + L-glutamine + ATP + H2O = L-glutaminyl-tRNA(Gln) + L-glutamate + ADP + phosphate + H(+). Allows the formation of correctly charged Gln-tRNA(Gln) through the transamidation of misacylated Glu-tRNA(Gln) in organisms which lack glutaminyl-tRNA synthetase. The reaction takes place in the presence of glutamine and ATP through an activated gamma-phospho-Glu-tRNA(Gln). The protein is Glutamyl-tRNA(Gln) amidotransferase subunit A of Limosilactobacillus fermentum (strain NBRC 3956 / LMG 18251) (Lactobacillus fermentum).